The following is an 835-amino-acid chain: Leucine--tRNA ligase (835 aa).

The short motif at 41-52 (PYPSGQGLHVGH) is the 'HIGH' region element. The 'KMSKS' region signature appears at 611 to 615 (KMSKS). Position 614 (Lys-614) interacts with ATP.

This sequence belongs to the class-I aminoacyl-tRNA synthetase family.

It is found in the cytoplasm. The enzyme catalyses tRNA(Leu) + L-leucine + ATP = L-leucyl-tRNA(Leu) + AMP + diphosphate. The polypeptide is Leucine--tRNA ligase (Elusimicrobium minutum (strain Pei191)).